Consider the following 194-residue polypeptide: WASH complex subunit 3 (194 aa).

Met-1 bears the N-acetylmethionine mark. The stretch at 46–74 forms a coiled coil; that stretch reads AVCEEKLADLSLRIQQIETTLNILDAKLS. 2 disordered regions span residues 94 to 126 and 158 to 194; these read VTNG…PSEN and SEGL…SFSD. Over residues 98-113 the composition is skewed to low complexity; sequence SHSETTSEQTQQNSTQ. Over residues 114-126 the composition is skewed to polar residues; it reads DSGAQESEAPSEN.

The protein belongs to the CCDC53 family. Component of the WASH core complex also described as WASH regulatory complex (SHRC) composed of WASHC1, WASHC2, WASHC3, WASHC4 and WASHC5. The WASH core complex associates via WASHC2 with the F-actin-capping protein dimer (formed by CAPZA1, CAPZA2 or CAPZA3 and CAPZB) in a transient or substoichiometric manner which was initially described as WASH complex.

The protein resides in the early endosome. In terms of biological role, acts as a component of the WASH core complex that functions as a nucleation-promoting factor (NPF) at the surface of endosomes, where it recruits and activates the Arp2/3 complex to induce actin polymerization, playing a key role in the fission of tubules that serve as transport intermediates during endosome sortingg. This chain is WASH complex subunit 3, found in Mus musculus (Mouse).